Reading from the N-terminus, the 198-residue chain is Recombination protein RecR (198 aa).

The C4-type zinc finger occupies 57-72; it reads CSVCGHITDRDPCYIC. A Toprim domain is found at 80–175; sequence SVVCVVQEPK…KVTRIAHGLP (96 aa).

This sequence belongs to the RecR family.

Functionally, may play a role in DNA repair. It seems to be involved in an RecBC-independent recombinational process of DNA repair. It may act with RecF and RecO. This is Recombination protein RecR from Bacillus thuringiensis (strain Al Hakam).